The sequence spans 701 residues: Long chain acyl-CoA synthetase 6, peroxisomal (701 aa).

A propeptide spans 1-38 (removed in mature form); the sequence is MDSSSSSSSAAARRRINAIHSHLVTSSRSSPLLRSNPT. Residues 15–23 carry the Microbody targeting signal motif; sequence RINAIHSHL. 266–277 contributes to the ATP binding site; sequence ICYTSGTTGTPK. The interval 526-550 is fatty acid-binding; it reads DGWLHTGDIGLWLPGGRLKIIDRKK.

The protein belongs to the ATP-dependent AMP-binding enzyme family. Mg(2+) serves as cofactor. Expressed in roots, stems, leaves flowers and germinating seedling. Preferentially expressed in seeds and senescent leaves.

It is found in the peroxisome. The protein localises to the glyoxysome membrane. The catalysed reaction is a long-chain fatty acid + ATP + CoA = a long-chain fatty acyl-CoA + AMP + diphosphate. The enzyme catalyses tetradecanoate + ATP + CoA = tetradecanoyl-CoA + AMP + diphosphate. It carries out the reaction hexadecanoate + ATP + CoA = hexadecanoyl-CoA + AMP + diphosphate. It catalyses the reaction (9Z)-octadecenoate + ATP + CoA = (9Z)-octadecenoyl-CoA + AMP + diphosphate. The catalysed reaction is (9Z,12Z)-octadecadienoate + ATP + CoA = (9Z,12Z)-octadecadienoyl-CoA + AMP + diphosphate. The enzyme catalyses (9Z,12Z,15Z)-octadecatrienoate + ATP + CoA = (9Z,12Z,15Z)-octadecatrienoyl-CoA + AMP + diphosphate. The protein operates within lipid metabolism; fatty acid metabolism. Functionally, activation of long-chain fatty acids for both synthesis of cellular lipids, and degradation via beta-oxidation. Preferentially uses palmitate, palmitoleate, oleate, linoleate and eicosenoate as substrates. Can use myristate and linolenate as substrates. May play a regulatory role both in fatty acid import into glyoxysomes and in fatty acid beta-oxidation. Functions redundantly with LACS7 in lipid mobilization for beta-oxidation during seed germination, which is essential for postgerminative growth and seedling establishment. The polypeptide is Long chain acyl-CoA synthetase 6, peroxisomal (Arabidopsis thaliana (Mouse-ear cress)).